A 34-amino-acid polypeptide reads, in one-letter code: PRRRRQASRPVRRRRRTRRSTAERRRRRVVRRRR.

The disordered stretch occupies residues 1–34; that stretch reads PRRRRQASRPVRRRRRTRRSTAERRRRRVVRRRR.

As to expression, testis.

It is found in the nucleus. The protein resides in the chromosome. Functionally, protamines substitute for histones in the chromatin of sperm during the haploid phase of spermatogenesis. They compact sperm DNA into a highly condensed, stable and inactive complex. This is Protamine from Dicentrarchus labrax (European seabass).